The following is a 225-amino-acid chain: Ureidoacrylate amidohydrolase RutB (225 aa).

The active-site Proton acceptor is aspartate 22. The active site involves lysine 131. Catalysis depends on cysteine 164, which acts as the Nucleophile.

Belongs to the isochorismatase family. RutB subfamily.

The catalysed reaction is (Z)-3-ureidoacrylate + H2O + H(+) = (Z)-3-aminoacrylate + NH4(+) + CO2. The enzyme catalyses (Z)-3-ureidoacrylate + H2O = (Z)-3-aminoacrylate + carbamate + H(+). It carries out the reaction (Z)-2-methylureidoacrylate + H2O + H(+) = (Z)-2-methylaminoacrylate + NH4(+) + CO2. Its function is as follows. Hydrolyzes ureidoacrylate to form aminoacrylate and carbamate. The carbamate hydrolyzes spontaneously, thereby releasing one of the nitrogen atoms of the pyrimidine ring as ammonia and one of its carbon atoms as CO2. The protein is Ureidoacrylate amidohydrolase RutB of Caulobacter vibrioides (strain ATCC 19089 / CIP 103742 / CB 15) (Caulobacter crescentus).